Consider the following 292-residue polypeptide: Elongation factor Ts (292 aa).

Residues 79–82 (TDFV) form an involved in Mg(2+) ion dislocation from EF-Tu region.

It belongs to the EF-Ts family.

The protein localises to the cytoplasm. In terms of biological role, associates with the EF-Tu.GDP complex and induces the exchange of GDP to GTP. It remains bound to the aminoacyl-tRNA.EF-Tu.GTP complex up to the GTP hydrolysis stage on the ribosome. The polypeptide is Elongation factor Ts (Xanthomonas campestris pv. campestris (strain B100)).